The chain runs to 68 residues: Large ribosomal subunit protein uL30 (68 aa).

It belongs to the universal ribosomal protein uL30 family. In terms of assembly, part of the 50S ribosomal subunit.

In Pseudarthrobacter chlorophenolicus (strain ATCC 700700 / DSM 12829 / CIP 107037 / JCM 12360 / KCTC 9906 / NCIMB 13794 / A6) (Arthrobacter chlorophenolicus), this protein is Large ribosomal subunit protein uL30.